The following is a 1400-amino-acid chain: DNA-directed RNA polymerase subunit beta (1400 aa).

Belongs to the RNA polymerase beta chain family. As to quaternary structure, the RNAP catalytic core consists of 2 alpha, 1 beta, 1 beta' and 1 omega subunit. When a sigma factor is associated with the core the holoenzyme is formed, which can initiate transcription.

The enzyme catalyses RNA(n) + a ribonucleoside 5'-triphosphate = RNA(n+1) + diphosphate. DNA-dependent RNA polymerase catalyzes the transcription of DNA into RNA using the four ribonucleoside triphosphates as substrates. The protein is DNA-directed RNA polymerase subunit beta of Acidiphilium cryptum (strain JF-5).